Reading from the N-terminus, the 561-residue chain is Efflux pump bfoC (561 aa).

The tract at residues 1 to 55 is disordered; the sequence is MSDTARILGGPSASSSRDGGMELNSFTEVSQTNSRSHSTKEEEGQVDDQQRPARE. A compositionally biased stretch (polar residues) spans 24–36; the sequence is NSFTEVSQTNSRS. Residues 38 to 55 are compositionally biased toward basic and acidic residues; the sequence is STKEEEGQVDDQQRPARE. 13 helical membrane passes run 59 to 79, 103 to 123, 128 to 148, 164 to 184, 194 to 214, 222 to 242, 257 to 277, 293 to 313, 335 to 355, 378 to 398, 425 to 445, 457 to 477, and 530 to 550; these read GVLG…CIFC, DVGW…LTFG, FFPI…GSFI, VAGL…SQCV, GFIM…GGAF, WCFY…LFTF, AVGL…CLLL, VVAL…LQLW, LYGF…PIWF, VVFA…GPFM, IGYQ…PIFV, TATA…VSVA, and VHTF…ATVI.

The protein belongs to the major facilitator superfamily. TCR/Tet family.

The protein resides in the cell membrane. Its function is as follows. Efflux pump; part of the gene cluster that mediates the biosynthesis of bifonsecin B, a dimeric gamma-naphthopyrone. The polypeptide is Efflux pump bfoC (Aspergillus brasiliensis (strain CBS 101740 / IMI 381727 / IBT 21946)).